Reading from the N-terminus, the 263-residue chain is Single-stranded DNA-binding protein WHY1, chloroplastic (263 aa).

The transit peptide at Met1–Lys47 directs the protein to the chloroplast. The tract at residues Lys89–Leu94 is required for ssDNA binding. The Nuclear localization signal signature appears at Lys167 to Lys180.

It belongs to the Whirly family. In terms of assembly, homotetramer.

The protein localises to the plastid. Its subcellular location is the chloroplast. It is found in the nucleus. In terms of biological role, single-stranded DNA-binding protein that functions in both chloroplasts and nucleus. In chloroplasts, maintains plastid genome stability by preventing break-induced and short homology-dependent illegitimate recombinations. In nucleus, modulates telomere length homeostasis by inhibiting the action of the telomerase at the extreme termini of chromosomes. Is recruited to a distal element upstream of the kinesin KP1 to mediate the transcriptional repression of KP1. Is required for full salicylic acid-dependent plant disease resistance responses. Can bind double-stranded DNA in vivo. The sequence is that of Single-stranded DNA-binding protein WHY1, chloroplastic (WHY1) from Arabidopsis thaliana (Mouse-ear cress).